A 99-amino-acid polypeptide reads, in one-letter code: RNA-binding protein HI_1333 (99 aa).

The 97-residue stretch at 2 to 98 (TTLSTKQKQF…SEEAKIQLPR (97 aa)) folds into the CRM domain.

The polypeptide is RNA-binding protein HI_1333 (Haemophilus influenzae (strain ATCC 51907 / DSM 11121 / KW20 / Rd)).